Here is a 279-residue protein sequence, read N- to C-terminus: MTTNGFDPFEWRSFYFPGMSREEAHKLLGEPQVSIGTFLMRDSSRPGEYSLTVREADEGNAVCHYLIERGEPKEDGTAAAGVKIANQSFPDIPALLNHFKMRVLTEASLLAAYKKPIIEVVVGTFKFTGERETDLPFEQGERLEILSKTNQDWWEARNALGTTGLVPANYVQIQMEFHNDRTSKGASQSSIGSSGGGAERFSSASTSSDNIELQPRLPAKAKVTFDRVPNAYDPTQLRVKKGQTVLVTQKMSNGMYKAELDGQIGSVPHTYLRFTAVSE.

An SH2 domain is found at 14–115 (FYFPGMSREE…EASLLAAYKK (102 aa)). The SH3 1 domain occupies 116-176 (PIIEVVVGTF…PANYVQIQME (61 aa)). The interval 181-213 (RTSKGASQSSIGSSGGGAERFSSASTSSDNIEL) is disordered. Residues 202-211 (SSASTSSDNI) are compositionally biased toward polar residues. The SH3 2 domain occupies 214–277 (QPRLPAKAKV…PHTYLRFTAV (64 aa)).

It belongs to the CRK family. In terms of assembly, interacts with ced-5 (via C-terminus which contains a candidate SH3-binding, proline-rich region). Forms a ternary complex with ced-5 and ced-12. Interacts (via SH2 domain) with src-1 (when activated and phosphorylated at 'Tyr-416').

Required for cell migration and engulfment of cell corpses but not for programmed cell death/apoptosis. Has a role in the migration of the 2 gonadal distal tip cells (DTCs). Plays a role in protecting dopaminergic neurons from oxidative stress-induced degeneration. This Caenorhabditis elegans protein is Cell death abnormality protein 2.